We begin with the raw amino-acid sequence, 428 residues long: Enolase 1 (428 aa).

Glutamine 167 lines the (2R)-2-phosphoglycerate pocket. Glutamate 209 functions as the Proton donor in the catalytic mechanism. Positions 246, 288, and 315 each coordinate Mg(2+). Positions 340, 369, 370, and 391 each coordinate (2R)-2-phosphoglycerate. Residue lysine 340 is the Proton acceptor of the active site.

The protein belongs to the enolase family. In terms of assembly, component of the RNA degradosome, a multiprotein complex involved in RNA processing and mRNA degradation. Requires Mg(2+) as cofactor.

It localises to the cytoplasm. It is found in the secreted. The protein resides in the cell surface. It carries out the reaction (2R)-2-phosphoglycerate = phosphoenolpyruvate + H2O. Its pathway is carbohydrate degradation; glycolysis; pyruvate from D-glyceraldehyde 3-phosphate: step 4/5. Its function is as follows. Catalyzes the reversible conversion of 2-phosphoglycerate (2-PG) into phosphoenolpyruvate (PEP). It is essential for the degradation of carbohydrates via glycolysis. This is Enolase 1 from Pseudomonas syringae pv. syringae (strain B728a).